We begin with the raw amino-acid sequence, 29 residues long: Trypsin inhibitor 3 (29 aa).

3 disulfide bridges follow: Cys3/Cys20, Cys10/Cys22, and Cys16/Cys28.

This sequence belongs to the protease inhibitor I7 (squash-type serine protease inhibitor) family.

Its subcellular location is the secreted. Strongly inhibits trypsin, weakly inhibits chymotrypsin. This chain is Trypsin inhibitor 3, found in Cyclanthera pedata (Achocha).